The primary structure comprises 396 residues: Mannonate dehydratase (396 aa).

Belongs to the mannonate dehydratase family. Fe(2+) serves as cofactor. Mn(2+) is required as a cofactor.

It catalyses the reaction D-mannonate = 2-dehydro-3-deoxy-D-gluconate + H2O. Its pathway is carbohydrate metabolism; pentose and glucuronate interconversion. In terms of biological role, catalyzes the dehydration of D-mannonate. In Enterobacter sp. (strain 638), this protein is Mannonate dehydratase.